The chain runs to 410 residues: Probable 2,3-bisphosphoglycerate-independent phosphoglycerate mutase (410 aa).

The protein belongs to the BPG-independent phosphoglycerate mutase family. A-PGAM subfamily.

The enzyme catalyses (2R)-2-phosphoglycerate = (2R)-3-phosphoglycerate. Its pathway is carbohydrate degradation; glycolysis; pyruvate from D-glyceraldehyde 3-phosphate: step 3/5. Functionally, catalyzes the interconversion of 2-phosphoglycerate and 3-phosphoglycerate. This Deinococcus radiodurans (strain ATCC 13939 / DSM 20539 / JCM 16871 / CCUG 27074 / LMG 4051 / NBRC 15346 / NCIMB 9279 / VKM B-1422 / R1) protein is Probable 2,3-bisphosphoglycerate-independent phosphoglycerate mutase.